The following is a 165-amino-acid chain: 2S seed storage protein 5 (165 aa).

Residues 1-20 form the signal peptide; sequence MAKLILVFATLALFILLANA. 2 consecutive propeptides follow at residues 21–37 and 71–89; these read SIYR…DVSN and YEAD…DDEN.

It belongs to the 2S seed storage albumins family. As to quaternary structure, the mature protein consists of a small and a large chain linked by disulfide bonds.

In terms of biological role, this is a 2S seed storage protein. The sequence is that of 2S seed storage protein 5 (SESA5) from Arabidopsis thaliana (Mouse-ear cress).